The chain runs to 241 residues: Carboxy-S-adenosyl-L-methionine synthase (241 aa).

S-adenosyl-L-methionine is bound by residues tyrosine 38, 63–65 (GCS), 88–89 (DN), 116–117 (DI), asparagine 131, and arginine 198.

This sequence belongs to the class I-like SAM-binding methyltransferase superfamily. Cx-SAM synthase family. Homodimer.

The catalysed reaction is prephenate + S-adenosyl-L-methionine = carboxy-S-adenosyl-L-methionine + 3-phenylpyruvate + H2O. Functionally, catalyzes the conversion of S-adenosyl-L-methionine (SAM) to carboxy-S-adenosyl-L-methionine (Cx-SAM). In Haemophilus influenzae (strain PittEE), this protein is Carboxy-S-adenosyl-L-methionine synthase.